Consider the following 328-residue polypeptide: tRNA uridine(34) hydroxylase (328 aa).

A Rhodanese domain is found at 130-224 (LDEDTVVLDT…YGKDPEVQGE (95 aa)). Catalysis depends on cysteine 184, which acts as the Cysteine persulfide intermediate.

It belongs to the TrhO family.

It catalyses the reaction uridine(34) in tRNA + AH2 + O2 = 5-hydroxyuridine(34) in tRNA + A + H2O. Catalyzes oxygen-dependent 5-hydroxyuridine (ho5U) modification at position 34 in tRNAs. This Streptococcus pyogenes serotype M12 (strain MGAS2096) protein is tRNA uridine(34) hydroxylase.